Consider the following 178-residue polypeptide: Large ribosomal subunit protein uL6 (178 aa).

Belongs to the universal ribosomal protein uL6 family. As to quaternary structure, part of the 50S ribosomal subunit.

Its function is as follows. This protein binds to the 23S rRNA, and is important in its secondary structure. It is located near the subunit interface in the base of the L7/L12 stalk, and near the tRNA binding site of the peptidyltransferase center. In Streptococcus pneumoniae serotype 4 (strain ATCC BAA-334 / TIGR4), this protein is Large ribosomal subunit protein uL6.